Reading from the N-terminus, the 391-residue chain is tRNA-specific 2-thiouridylase MnmA (391 aa).

Residues 35 to 42 (GLSGGVDS) and Leu61 each bind ATP. Residue Cys122 is the Nucleophile of the active site. Cys122 and Cys221 are disulfide-bonded. Position 147 (Gly147) interacts with ATP. Residues 171 to 173 (KDQ) form an interaction with tRNA region. The active-site Cysteine persulfide intermediate is Cys221. The interval 328–329 (RY) is interaction with tRNA.

The protein belongs to the MnmA/TRMU family.

It localises to the cytoplasm. The catalysed reaction is S-sulfanyl-L-cysteinyl-[protein] + uridine(34) in tRNA + AH2 + ATP = 2-thiouridine(34) in tRNA + L-cysteinyl-[protein] + A + AMP + diphosphate + H(+). Catalyzes the 2-thiolation of uridine at the wobble position (U34) of tRNA, leading to the formation of s(2)U34. This is tRNA-specific 2-thiouridylase MnmA from Synechococcus sp. (strain CC9311).